Reading from the N-terminus, the 264-residue chain is Eukaryotic translation initiation factor 6 (264 aa).

It belongs to the eIF-6 family. As to quaternary structure, monomer. Associates with the 60S ribosomal subunit.

The protein resides in the cytoplasm. It is found in the nucleus. It localises to the nucleolus. Its function is as follows. Binds to the 60S ribosomal subunit and prevents its association with the 40S ribosomal subunit to form the 80S initiation complex in the cytoplasm. May also be involved in ribosome biogenesis. This Toxoplasma gondii (strain ATCC 50861 / VEG) protein is Eukaryotic translation initiation factor 6.